A 77-amino-acid polypeptide reads, in one-letter code: Putative Fis-like DNA-binding protein (77 aa).

The H-T-H motif DNA-binding region spans 53 to 72 (QSLAADYLGINRNTLRKKLQ).

It belongs to the transcriptional regulatory Fis family.

In Ralstonia nicotianae (strain ATCC BAA-1114 / GMI1000) (Ralstonia solanacearum), this protein is Putative Fis-like DNA-binding protein.